Consider the following 221-residue polypeptide: Ras-related protein Rab-27A (221 aa).

Ser-2 is modified (N-acetylserine). Ser-2 is modified (phosphoserine). GTP is bound at residue Gly-16–Ser-24. Positions Phe-38–Phe-46 match the Effector region motif. Residues Asp-74 to Gln-78, Asn-133 to Asp-136, and Ser-163 to Ala-165 each bind GTP. Cys-123 and Cys-188 are oxidised to a cystine. Residues Cys-219 and Cys-221 are each lipidated (S-geranylgeranyl cysteine). Cys-221 carries the cysteine methyl ester modification.

The protein belongs to the small GTPase superfamily. Rab family. Binds SYTL1, SYTL2, SLAC2B, MYRIP, SYTL3, SYTL4, SYTL5 and MLPH. Interacts with UNC13D. Interacts with RPH3A and RPH3A. Does not interact with the BLOC-3 complex (heterodimer of HPS1 and HPS4). Interacts (GDP-bound form preferentially) with DENND10. As to expression, detected in melanocytes. Expressed abundantly in the stomach and is predominantly localized at the apical region of gastric-surface mucus cells. Also expressed in the thymus and lung.

Its subcellular location is the membrane. It is found in the melanosome. The protein resides in the late endosome. The protein localises to the lysosome. The catalysed reaction is GTP + H2O = GDP + phosphate + H(+). Regulated by guanine nucleotide exchange factors (GEFs) which promote the exchange of bound GDP for free GTP, GTPase activating proteins (GAPs) which increase the GTP hydrolysis activity, and GDP dissociation inhibitors which inhibit the dissociation of the nucleotide from the GTPase. Activated by GEFs such as DENND10. Small GTPase which cycles between active GTP-bound and inactive GDP-bound states. In its active state, binds to a variety of effector proteins to regulate homeostasis of late endocytic pathway, including endosomal positioning, maturation and secretion. Plays a role in cytotoxic granule exocytosis in lymphocytes. Required for both granule maturation and granule docking and priming at the immunologic synapse. The polypeptide is Ras-related protein Rab-27A (Rab27a) (Mus musculus (Mouse)).